The primary structure comprises 1077 residues: Protein hairless (1077 aa).

7 disordered regions span residues 14–75, 97–141, 269–322, 340–368, 408–504, 533–876, and 976–1077; these read NRQT…SNNN, SSTS…HAKT, PSAA…SRPR, TLGR…DQQP, IEKP…PKAK, TTTS…PTSN, and GQPA…LSKH. Low complexity-rich tracts occupy residues 26–75, 115–130, 269–286, and 293–308; these read NINS…SNNN, TTTP…SSST, PSAA…VTTA, and STSL…IQSS. Composition is skewed to basic and acidic residues over residues 408 to 439 and 449 to 459; these read IEKP…ESKE and QPKDETVDVEM. Gly residues predominate over residues 596–607; it reads GSGGASSGGAGG. A compositionally biased stretch (low complexity) spans 640 to 684; it reads PGSSSSSTSPATLSTQPTRLNSSYSIHSLLGGSSGSGSSSFSSSG. Residues 704–713 are compositionally biased toward polar residues; it reads SMYQPSSSSY. Phosphoserine is present on residues serine 720, serine 723, serine 746, and serine 753. The segment covering 772–782 has biased composition (polar residues); sequence PSTSGSASQDL. Composition is skewed to low complexity over residues 783–798 and 811–829; these read SPPR…TPRT and ASPS…RSAS. Residues 837-846 are compositionally biased toward polar residues; the sequence is QQQPHLQRSS. Residues 865-876 are compositionally biased toward low complexity; the sequence is AGSPTSAPPTSN. Residues 984–995 are compositionally biased toward basic residues; sequence THPHLAHPHQHP. 2 stretches are compositionally biased toward low complexity: residues 996-1012 and 1023-1055; these read HPAA…LATP and SATS…SSSA. The span at 1056-1070 shows a compositional bias: polar residues; it reads MFHTSSLRNEQSSDL.

As to expression, during embryogenesis expression is primarily in endo- and mesodermal cell layers. Ovary, embryos, larval and pupal imaginal disks.

The protein localises to the nucleus. In terms of biological role, is a potent antagonist of neurogenic gene activity during sensory organ development. The expression of distinct cell fates by the trichogen (shaft) / tormogen (socket) sister cell pair depends on the level of H activity. A certain threshold level of H activity is required, below which both sister cells adopt the tormogen fate. The protein is Protein hairless (H) of Drosophila melanogaster (Fruit fly).